Consider the following 366-residue polypeptide: uncharacterized protein (366 aa).

Residues 199-267 (QKKQIEDEEK…QLKDAQAKRD (69 aa)) are disordered.

This is an uncharacterized protein from Haemophilus influenzae (strain ATCC 51907 / DSM 11121 / KW20 / Rd).